We begin with the raw amino-acid sequence, 550 residues long: Dihydroxy-acid dehydratase (550 aa).

D78 serves as a coordination point for Mg(2+). C119 is a [2Fe-2S] cluster binding site. Mg(2+)-binding residues include D120 and K121. K121 is subject to N6-carboxylysine. A [2Fe-2S] cluster-binding site is contributed by C191. E440 is a Mg(2+) binding site. Catalysis depends on S466, which acts as the Proton acceptor.

The protein belongs to the IlvD/Edd family. In terms of assembly, homodimer. Requires [2Fe-2S] cluster as cofactor. The cofactor is Mg(2+).

It carries out the reaction (2R)-2,3-dihydroxy-3-methylbutanoate = 3-methyl-2-oxobutanoate + H2O. It catalyses the reaction (2R,3R)-2,3-dihydroxy-3-methylpentanoate = (S)-3-methyl-2-oxopentanoate + H2O. The protein operates within amino-acid biosynthesis; L-isoleucine biosynthesis; L-isoleucine from 2-oxobutanoate: step 3/4. It functions in the pathway amino-acid biosynthesis; L-valine biosynthesis; L-valine from pyruvate: step 3/4. Functions in the biosynthesis of branched-chain amino acids. Catalyzes the dehydration of (2R,3R)-2,3-dihydroxy-3-methylpentanoate (2,3-dihydroxy-3-methylvalerate) into 2-oxo-3-methylpentanoate (2-oxo-3-methylvalerate) and of (2R)-2,3-dihydroxy-3-methylbutanoate (2,3-dihydroxyisovalerate) into 2-oxo-3-methylbutanoate (2-oxoisovalerate), the penultimate precursor to L-isoleucine and L-valine, respectively. The chain is Dihydroxy-acid dehydratase from Methanococcus maripaludis (strain DSM 14266 / JCM 13030 / NBRC 101832 / S2 / LL).